A 413-amino-acid chain; its full sequence is Putative competence-damage inducible protein (413 aa).

This sequence belongs to the CinA family.

This Desulforudis audaxviator (strain MP104C) protein is Putative competence-damage inducible protein.